A 75-amino-acid chain; its full sequence is MFTLKKPLLFLFFLGTISLSFCEEERGADEDDGGEMTEEEKRGVLDTLKNVAIGVAKGAGTGVLKALLCQLDKSC.

Residues 1-22 (MFTLKKPLLFLFFLGTISLSFC) form the signal peptide. Positions 23–40 (EEERGADEDDGGEMTEEE) are cleaved as a propeptide — removed in mature form. Cys-69 and Cys-75 are joined by a disulfide.

This sequence belongs to the frog skin active peptide (FSAP) family. Brevinin subfamily. Expressed by the skin glands.

The protein localises to the secreted. Antimicrobial peptide. Active against some Gram-negative and a variety of Gram-positive bacterial strains. Active against fungus C.glabrata 090902 but not against C.albicans ATCC 10231. Shows hemolytic activity against human erythrocytes. This is Brevinin-2SN2 from Sylvirana spinulosa (Fine-spined frog).